The chain runs to 3661 residues: Serine/threonine-protein kinase SMG1 (3661 aa).

Low complexity predominate over residues 1–11 (MSRRAPGSRLS). Disordered regions lie at residues 1–101 (MSRR…TYGR) and 116–144 (PEFTSVQHGSRALATKDMRKSQERSMSYS). Residues 1 to 1977 (MSRRAPGSRL…GVLLQQHMYV (1977 aa)) are interaction with SMG8 and SMG9. Over residues 26–35 (NDWQPRTDSA) the composition is skewed to polar residues. Basic and acidic residues-rich tracts occupy residues 69–86 (QRHDDTRVHADIQNDEKG) and 129–138 (ATKDMRKSQE). Lys173 bears the N6-acetyllysine mark. A compositionally biased stretch (polar residues) spans 1154–1165 (RNSASPKHSLNG). The tract at residues 1154-1175 (RNSASPKHSLNGESRKTVLSKP) is disordered. The FAT domain maps to 1283–1866 (RELQKSIEVQ…LYPAIVGTIS (584 aa)). One copy of the HEAT repeat lies at 1817–1852 (APWRGIIPQLFSRLNHPEVYVRQSICNLLCRVAQDS). The tract at residues 1898–1919 (ECEGGSPPASQDSNKDEPKSGL) is disordered. In terms of domain architecture, PI3K/PI4K catalytic spans 2124–2463 (VGGTITILPT…MEREITRSLF (340 aa)). Residues 2130–2136 (ILPTKTK) are G-loop. Positions 2332-2340 (GLGDRHLDN) are catalytic loop. The tract at residues 2352–2376 (HIDYNVCFEKGKSLRVPEKVPFRMT) is activation loop. Thr3550 carries the phosphothreonine modification. A phosphoserine mark is found at Ser3556 and Ser3570. Polar residues predominate over residues 3568-3579 (ATSADTPPSTVP). The interval 3568-3591 (ATSADTPPSTVPGTGKSVACSPKK) is disordered. Phosphothreonine occurs at positions 3573 and 3577. The region spanning 3629–3661 (RRMSVAEQVDYVIKEATNLDNLAQLYEGWTAWV) is the FATC domain.

It belongs to the PI3/PI4-kinase family. In terms of assembly, component of the SMG1C complex composed of SMG1, SMG8 and SMG9; the recruitment of SMG8 to SMG1 N-terminus induces a large conformational change in the SMG1 C-terminal head domain containing the catalytic domain. Component of the transient SURF (SMG1-UPF1-eRF1-eRF3) complex. Part of a complex composed of SMG1, DHX34 and UPF1; within the complex DHX34 acts as a scaffolding protein to facilitate SMG1 phosphorylation of UPF1. Interacts with PRKCI. Interacts with TELO2 and TTI1. Interacts with RUVBL1 and RUVBL2. Interacts with UPF2. Interacts with DHX34 (via C-terminus); the interaction is RNA-independent. Mn(2+) is required as a cofactor. Autophosphorylated. As to expression, widely expressed, with highest level in heart and skeletal muscle. Expressed in placenta, brain, lung and spleen, but not in liver.

It is found in the nucleus. Its subcellular location is the cytoplasm. The enzyme catalyses L-seryl-[protein] + ATP = O-phospho-L-seryl-[protein] + ADP + H(+). It carries out the reaction L-threonyl-[protein] + ATP = O-phospho-L-threonyl-[protein] + ADP + H(+). With respect to regulation, inhibited by caffeine, LY294002 and wortmannin. Serine/threonine protein kinase involved in both mRNA surveillance and genotoxic stress response pathways. Recognizes the substrate consensus sequence [ST]-Q. Plays a central role in nonsense-mediated decay (NMD) of mRNAs containing premature stop codons by phosphorylating UPF1/RENT1. Recruited by release factors to stalled ribosomes together with SMG8 and SMG9 (forming the SMG1C protein kinase complex), and UPF1 to form the transient SURF (SMG1-UPF1-eRF1-eRF3) complex. In EJC-dependent NMD, the SURF complex associates with the exon junction complex (EJC) through UPF2 and allows the formation of an UPF1-UPF2-UPF3 surveillance complex which is believed to activate NMD. Also acts as a genotoxic stress-activated protein kinase that displays some functional overlap with ATM. Can phosphorylate p53/TP53 and is required for optimal p53/TP53 activation after cellular exposure to genotoxic stress. Its depletion leads to spontaneous DNA damage and increased sensitivity to ionizing radiation (IR). May activate PRKCI but not PRKCZ. The polypeptide is Serine/threonine-protein kinase SMG1 (Homo sapiens (Human)).